A 210-amino-acid chain; its full sequence is Thymidylate kinase (210 aa).

An ATP-binding site is contributed by 9–16 (GLEGAGKS).

It belongs to the thymidylate kinase family.

It carries out the reaction dTMP + ATP = dTDP + ADP. Phosphorylation of dTMP to form dTDP in both de novo and salvage pathways of dTTP synthesis. This is Thymidylate kinase from Aliivibrio fischeri (strain MJ11) (Vibrio fischeri).